The sequence spans 352 residues: Guanidino acid hydrolase, mitochondrial (352 aa).

A mitochondrion-targeting transit peptide spans 1 to 35 (MLRLLASGCARGPGPGVGARPAAGLFHPGRRQSRQ). Residues 11 to 49 (RGPGPGVGARPAAGLFHPGRRQSRQASDAPRNQPPSPEF) are disordered. Positions 162, 185, 187, and 189 each coordinate Mn(2+). An N6-acetyllysine modification is found at lysine 193. Lysine 217 carries the N6-acetyllysine; alternate modification. An N6-succinyllysine; alternate modification is found at lysine 217. Residues aspartate 276 and aspartate 278 each contribute to the Mn(2+) site.

The protein belongs to the ureohydrolase superfamily. Arginase family. Mn(2+) serves as cofactor. Highly expressed in liver and kidney. Also found in skeletal muscle, fetal liver, brain, testis, skin and the gastrointestinal tract. Within brain, expression is higher in the cerebral cortex with lower levels in the medulla and spinal cord.

The protein localises to the mitochondrion. It catalyses the reaction 3-guanidinopropanoate + H2O = urea + beta-alanine. The catalysed reaction is 4-guanidinobutanoate + H2O = urea + 4-aminobutanoate. The enzyme catalyses taurocyamine + H2O = urea + taurine. It carries out the reaction L-arginine + H2O = urea + L-ornithine. It functions in the pathway nitrogen metabolism; urea cycle; L-ornithine and urea from L-arginine: step 1/1. Functionally, hydrolyzes linear guanidino acids to form urea and the corresponding amines. Displays specificity for substrates having a negatively charged head group and short chains including taurocyamine, guanidino propanoic and butanoic acids. May protect cells by detoxifying potentially harmful amounts of guanidino acids. Metabolizes L-arginine with low efficiency. In Homo sapiens (Human), this protein is Guanidino acid hydrolase, mitochondrial (AGMAT).